The sequence spans 357 residues: DNA replication and repair protein RecF (357 aa).

Position 31 to 38 (31 to 38) interacts with ATP; the sequence is GQNGAGKT.

The protein belongs to the RecF family.

It localises to the cytoplasm. The RecF protein is involved in DNA metabolism; it is required for DNA replication and normal SOS inducibility. RecF binds preferentially to single-stranded, linear DNA. It also seems to bind ATP. This is DNA replication and repair protein RecF from Coxiella burnetii (strain Dugway 5J108-111).